Here is a 141-residue protein sequence, read N- to C-terminus: Hemoglobin subunit alpha-A (141 aa).

The 141-residue stretch at 1 to 141 folds into the Globin domain; that stretch reads VLTEEDKSRV…VAKTLVSRYR (141 aa). Position 58 (H58) interacts with O2. Residue H87 coordinates heme b.

It belongs to the globin family. Heterotetramer of two alpha chains and two beta chains. In terms of tissue distribution, red blood cells.

Its function is as follows. Involved in oxygen transport from the lung to the various peripheral tissues. In Drymarchon melanurus erebennus (Texas indigo snake), this protein is Hemoglobin subunit alpha-A.